The following is a 314-amino-acid chain: Splicing factor YJU2 (314 aa).

Residues C43, C46, C80, and C83 each coordinate Zn(2+). Disordered stretches follow at residues 178–238 and 253–314; these read MSQE…NEVP and LAGL…DSDS. Basic and acidic residues predominate over residues 200–209; the sequence is EEARHRRLLE. 3 positions are modified to phosphoserine: S211, S213, and S220. Positions 222–232 are enriched in low complexity; that stretch reads PRAAARPNPTA. Residues 290 to 302 show a composition bias toward polar residues; that stretch reads PTPQTPGTSSLSQ. S309, S312, and S314 each carry phosphoserine.

The protein belongs to the CWC16 family. YJU2 subfamily. In terms of assembly, component of the spliceosome. Present in the activated B complex, the catalytically activated B* complex which catalyzes the branching, the catalytic step 1 C complex catalyzing the exon ligation, and the postcatalytic P complex containing the ligated exons (mRNA) and the excised lariat intron.

It is found in the nucleus. In terms of biological role, part of the spliceosome which catalyzes two sequential transesterification reactions, first the excision of the non-coding intron from pre-mRNA and then the ligation of the coding exons to form the mature mRNA. Plays a role in stabilizing the structure of the spliceosome catalytic core and docking of the branch helix into the active site, producing 5'-exon and lariat intron-3'-intermediates. May protect cells from TP53-dependent apoptosis upon dsDNA break damage through association with PRP19-CD5L complex. In Mus musculus (Mouse), this protein is Splicing factor YJU2.